The primary structure comprises 448 residues: Glucose-6-phosphate isomerase (448 aa).

Glutamate 291 acts as the Proton donor in catalysis. Active-site residues include histidine 312 and lysine 425.

It belongs to the GPI family.

It localises to the cytoplasm. The enzyme catalyses alpha-D-glucose 6-phosphate = beta-D-fructose 6-phosphate. The protein operates within carbohydrate biosynthesis; gluconeogenesis. It functions in the pathway carbohydrate degradation; glycolysis; D-glyceraldehyde 3-phosphate and glycerone phosphate from D-glucose: step 2/4. Functionally, catalyzes the reversible isomerization of glucose-6-phosphate to fructose-6-phosphate. The sequence is that of Glucose-6-phosphate isomerase from Symbiobacterium thermophilum (strain DSM 24528 / JCM 14929 / IAM 14863 / T).